We begin with the raw amino-acid sequence, 290 residues long: Arylamine N-acetyltransferase 1 (290 aa).

Methionine 1 carries the post-translational modification N-acetylmethionine. Cysteine 68 acts as the Acyl-thioester intermediate in catalysis. 2 residues coordinate CoA: threonine 103 and glycine 104. Residue 106 to 107 (IH) participates in substrate binding. Residues histidine 107 and aspartate 122 contribute to the active site. CoA contacts are provided by tyrosine 208 and serine 214.

This sequence belongs to the arylamine N-acetyltransferase family.

It is found in the cytoplasm. The catalysed reaction is an arylamine + acetyl-CoA = an N-acetylarylamine + CoA. In terms of biological role, participates in the detoxification of a plethora of hydrazine and arylamine drugs. Catalyzes the N- or O-acetylation of various arylamine and heterocyclic amine substrates and is able to bioactivate several known carcinogens. The chain is Arylamine N-acetyltransferase 1 (NAT1) from Homo sapiens (Human).